Reading from the N-terminus, the 204-residue chain is Guanylate kinase (204 aa).

A Guanylate kinase-like domain is found at 1-182; the sequence is MLYIISAPSG…ALSDLNTIIC (182 aa). 7–14 is a binding site for ATP; it reads APSGTGKS.

The protein belongs to the guanylate kinase family.

Its subcellular location is the cytoplasm. It carries out the reaction GMP + ATP = GDP + ADP. Functionally, essential for recycling GMP and indirectly, cGMP. This Baumannia cicadellinicola subsp. Homalodisca coagulata protein is Guanylate kinase.